Here is a 515-residue protein sequence, read N- to C-terminus: Heavy metal-associated isoprenylated plant protein 41 (515 aa).

In terms of domain architecture, HMA spans 376–444 (KQRIVLKMDM…KVCMTTIITV (69 aa)). Cys-512 is modified (cysteine methyl ester). Cys-512 is lipidated: S-farnesyl cysteine. Positions 513-515 (RIL) are cleaved as a propeptide — removed in mature form.

Belongs to the HIPP family.

Its function is as follows. Heavy-metal-binding protein. In Arabidopsis thaliana (Mouse-ear cress), this protein is Heavy metal-associated isoprenylated plant protein 41.